The chain runs to 247 residues: Carboxy-S-adenosyl-L-methionine synthase (247 aa).

S-adenosyl-L-methionine is bound by residues Tyr-39, 64–66 (GCS), 89–90 (DN), 117–118 (DI), Asn-132, and Arg-199.

This sequence belongs to the class I-like SAM-binding methyltransferase superfamily. Cx-SAM synthase family. Homodimer.

The enzyme catalyses prephenate + S-adenosyl-L-methionine = carboxy-S-adenosyl-L-methionine + 3-phenylpyruvate + H2O. Catalyzes the conversion of S-adenosyl-L-methionine (SAM) to carboxy-S-adenosyl-L-methionine (Cx-SAM). The protein is Carboxy-S-adenosyl-L-methionine synthase of Cronobacter sakazakii (strain ATCC BAA-894) (Enterobacter sakazakii).